A 744-amino-acid chain; its full sequence is Palmitoyltransferase ZDHHC5-A (744 aa).

Positions 1–11 (MPSGSMSGGVS) are enriched in gly residues. A disordered region spans residues 1 to 25 (MPSGSMSGGVSGPTSPPHPTVPSRP). The Cytoplasmic segment spans residues 1–30 (MPSGSMSGGVSGPTSPPHPTVPSRPLRPSR). The helical transmembrane segment at 31–51 (YVPVSAATAFLVGSTTLFFCF) threads the bilayer. Topologically, residues 52–61 (TCPWLSEQFS) are extracellular. The chain crosses the membrane as a helical span at residues 62-82 (VAVPIYNGVMFMFVLANFCMA). Residues 83–167 (TFMDPGIFPR…IGRRNYRYFF (85 aa)) are Cytoplasmic-facing. A DHHC domain is found at 121–171 (KWCSTCRFYRPPRCSHCSVCDNCVEDFDHHCPWVNNCIGRRNYRYFFLFLL). Cys151 serves as the catalytic S-palmitoyl cysteine intermediate. Residues 168 to 188 (LFLLSLTAHIMGVFGFGLLFI) traverse the membrane as a helical segment. Over 189-208 (LYHTQQLDRVHSAVTMAVMC) the chain is Extracellular. A helical membrane pass occupies residues 209–229 (VAGLFFIPVAGLTGFHVVLVA). At 230–744 (RGRTTNEQVT…VGGTTYEISV (515 aa)) the chain is on the cytoplasmic side. Disordered regions lie at residues 314 to 523 (SLEM…PVVG), 556 to 645 (QHAV…SLSY), and 664 to 744 (SVAG…EISV). Residues 369 to 393 (TYSSPGKNHTALTHAYANQSSQQPG) are compositionally biased toward polar residues. Over residues 398-413 (PSLDGREGGGAERSGA) the composition is skewed to basic and acidic residues. The span at 415-428 (RTGGGPGGPPGSGI) shows a compositional bias: gly residues. Over residues 460–501 (THNAPPSEATTSTSYKSLANQTPPQAARNGSLSYDSLLTPSE) the composition is skewed to polar residues. The segment covering 571-584 (PERERERLLHDSQA) has biased composition (basic and acidic residues). Residues 585–601 (QHHHHHHHHHHHHRPPR) show a composition bias toward basic residues. Composition is skewed to low complexity over residues 621–630 (RTRSTDTTHP) and 689–723 (PKPS…SPAH). Residues 725 to 737 (PGGGVKKVTGVGG) are compositionally biased toward gly residues.

It belongs to the DHHC palmitoyltransferase family. ERF2/ZDHHC9 subfamily.

It is found in the cell membrane. It carries out the reaction L-cysteinyl-[protein] + hexadecanoyl-CoA = S-hexadecanoyl-L-cysteinyl-[protein] + CoA. Palmitoyltransferase that catalyzes the addition of palmitate onto various protein substrates and is involved in a variety of cellular processes. This is Palmitoyltransferase ZDHHC5-A from Danio rerio (Zebrafish).